Consider the following 478-residue polypeptide: Solute carrier family 2, facilitated glucose transporter member 8 (478 aa).

Positions 1-20 are disordered; it reads MTPEDQEETQPLLRPPGGSA. Over 1–25 the chain is Cytoplasmic; that stretch reads MTPEDQEETQPLLRPPGGSAPRGRR. The span at 11–20 shows a compositional bias: low complexity; that stretch reads PLLRPPGGSA. Residues 12–13 carry the Dileucine internalization motif motif; that stretch reads LL. A helical membrane pass occupies residues 26–46; the sequence is VFLAAFAAALGPLSFGFALGY. Over 47–70 the chain is Extracellular; that stretch reads SSPAIPSLRRAAPPAPHLDEDAAS. A helical membrane pass occupies residues 71–91; sequence WFGAIVTLGAAAGGVLGGWLL. The Cytoplasmic portion of the chain corresponds to 92–97; that stretch reads DRAGRK. The helical transmembrane segment at 98 to 118 threads the bilayer; sequence LSLVLCALPFVAGFAVITAAQ. The Extracellular portion of the chain corresponds to 119–127; the sequence is NLWMLLGGR. A helical membrane pass occupies residues 128–148; the sequence is LLTGLACGIASLVAPVYISEI. Residues 149–158 are Cytoplasmic-facing; the sequence is AYPEVRGLLG. The helical transmembrane segment at 159–179 threads the bilayer; that stretch reads SCVQLMVVTGILLAYLAGWVL. Position 162 (Gln162) interacts with D-glucose. At 180–182 the chain is on the extracellular side; sequence EWR. Residues 183-203 traverse the membrane as a helical segment; sequence WLAVLGCVPPSFMLLLMCFMP. Over 204–257 the chain is Cytoplasmic; sequence ETPRFLLSQHKHQEAMAAMQFLWGYAQGWEEPPLGAQHQDFHVAQLRRPGVYKP. A helical transmembrane segment spans residues 258–278; it reads FIIGISLMAFQQLSGVNAVMF. Residues 268–269 and Asn274 each bind D-glucose; that span reads QQ. Over 279 to 293 the chain is Extracellular; sequence YAETIFEEAKFKDSS. The helical transmembrane segment at 294-314 threads the bilayer; sequence LASVVVGVIQVLFTATAALIM. Residues 315-320 are Cytoplasmic-facing; it reads DRAGRR. A helical membrane pass occupies residues 321-341; it reads LLLTLSGVVMVFSTSAFGTYF. Residues 342–368 lie on the Extracellular side of the membrane; sequence KLTEGGPSNSSHVDLPALVSMEAADTN. Asn350 carries N-linked (GlcNAc...) asparagine glycosylation. The helical transmembrane segment at 369–389 threads the bilayer; that stretch reads VGLAWLAVGSMCLFIAGFAVG. At 390–405 the chain is on the cytoplasmic side; the sequence is WGPIPWLLMSEIFPLH. Trp395 contacts D-glucose. The helical transmembrane segment at 406 to 426 threads the bilayer; that stretch reads VKGVATGVCVLTNWFMAFLVT. The Extracellular portion of the chain corresponds to 427-439; it reads KEFSSLMEVLRPY. The helical transmembrane segment at 440 to 460 threads the bilayer; it reads GAFWLASAFCIFGVLFTLACV. Residues 461–478 are Cytoplasmic-facing; that stretch reads PETKGKTLEQITAHFEGR.

The protein belongs to the major facilitator superfamily. Sugar transporter (TC 2.A.1.1) family. Glucose transporter subfamily. In terms of assembly, interacts with AP2B1. As to expression, abundantly expressed in testis and more moderately in lung, kidney, spleen, intestine, skeletal muscle, liver and mammary gland.

The protein localises to the cell membrane. Its subcellular location is the cytoplasmic vesicle membrane. The enzyme catalyses D-glucose(out) = D-glucose(in). It carries out the reaction D-fructose(out) = D-fructose(in). The catalysed reaction is L-dehydroascorbate(out) = L-dehydroascorbate(in). It catalyses the reaction alpha,alpha-trehalose(in) = alpha,alpha-trehalose(out). Inhibited by cytochalasin B. Insulin-regulated facilitative hexose transporter that mediates the transport of glucose and fructose. Facilitates hepatic influx of dietary trehalose, which in turn inhibits glucose and fructose influx triggering a starvation signal and hepatic autophagy through activation of AMPK and ULK1. Also able to mediate the transport of dehydroascorbate. This Bos taurus (Bovine) protein is Solute carrier family 2, facilitated glucose transporter member 8.